The primary structure comprises 512 residues: MATTNGAVENGQPDGKPPALPRPIRNLEVKFTKIFINNDWHESKSGRKFATYNPSTLEKICEVEEGDKPDVDKAVEAAQAAFQRGSPWRRLDALSRGQLLHQLADLVERDRAILATLETMDTGKPFLHAFFVDLEGCIKTFRYFAGWADKIQGRTIPTDDNVVCFTRHEPIGVCGAITPWNFPLLMLAWKLAPALCCGNTVVLKPAEQTPLTALYLASLIKEVGFPPGVVNIVPGFGPTVGAAISSHPQINKIAFTGSTEVGKLVREAASRSNLKRVTLELGGKNPCIVCADADLDLAVECAHQGVFFNQGQCCTAASRVFVEEQVYGEFVRRSVEFAKKRPVGDPFDAKTEQGPQIDQKQFDKILELIESGKKEGAKLECGGSAMEDRGLFIKPTVFSDVTDNMRIAKEEIFGPVQPILKFKNLEEVIKRANSTDYGLTAAVFTKNLDKALKLAAALESGTVWINCYNAFYAQAPFGGFKMSGNGRELGEYALAEYTEVKTVTIKLEEKNP.

The segment at 1-22 is disordered; the sequence is MATTNGAVENGQPDGKPPALPR. Position 2 is an N-acetylalanine (Ala-2). Residues Lys-204, Glu-207, and 257–262 contribute to the NAD(+) site; that span reads GSTEVG. Residue Glu-280 is the Proton acceptor of the active site. Cys-314 (nucleophile) is an active-site residue. NAD(+)-binding residues include Gln-361 and Glu-411.

The protein belongs to the aldehyde dehydrogenase family. In terms of assembly, homotetramer. Detected in embryonic head (at protein level). Ventral retina.

It is found in the cytoplasm. It catalyses the reaction retinal + NAD(+) + H2O = retinoate + NADH + 2 H(+). It carries out the reaction all-trans-retinal + NAD(+) + H2O = all-trans-retinoate + NADH + 2 H(+). The enzyme catalyses all-trans-13,14-dihydroretinal + NAD(+) + H2O = all-trans-13,14-dihydroretinoate + NADH + 2 H(+). The protein operates within cofactor metabolism; retinol metabolism. Catalyzes the NAD-dependent oxidation of aldehyde substrates, such as all-trans-retinal and all-trans-13,14-dihydroretinal, to their corresponding carboxylic acids, all-trans-retinoate and all-trans-13,14-dihydroretinoate, respectively. High specificity for all-trans-retinal as substrate, can also accept acetaldehyde as substrate in vitro but with lower affinity. Required for the biosynthesis of normal levels of retinoate in the embryonic ocular and nasal regions; a critical lipid in the embryonic development of the eye and the nasal region. This Mus musculus (Mouse) protein is Retinaldehyde dehydrogenase 3 (Aldh1a3).